Reading from the N-terminus, the 596-residue chain is Pentatricopeptide repeat-containing protein At1g50270 (596 aa).

PPR repeat units lie at residues 66 to 102 (SIQL…GVIP), 103 to 136 (SRHT…GLDS), 137 to 167 (DPFV…AEDK), 168 to 202 (DVVT…GVAA), 203 to 237 (NEMT…GRVK), 239 to 269 (DVFI…MPSR), 270 to 304 (NVVT…DVAP), 305 to 339 (NEKT…SIEI), 340 to 370 (NTTA…LHEK), 371 to 405 (NVYT…HVSP), 406 to 436 (NEVT…MKGR), and 442 to 472 (KADH…MPME). The interval 477–552 (VWGALFGSCL…SPGFSWIEVK (76 aa)) is type E motif. The tract at residues 553–584 (GKLCEFIAFDDKKPLESDDLYKTLDTVGVQMR) is type E(+) motif.

The protein belongs to the PPR family. PCMP-E subfamily.

The sequence is that of Pentatricopeptide repeat-containing protein At1g50270 (PCMP-E42) from Arabidopsis thaliana (Mouse-ear cress).